The chain runs to 218 residues: Large ribosomal subunit protein uL4 (218 aa).

The segment at 46-102 is disordered; that stretch reads ARQGTHSTKTRGEVRGGGRKPFRQKGTGRARQGSIRAPHFTGGGISHGPKPRDYSQR. Over residues 62 to 73 the composition is skewed to basic residues; it reads GGRKPFRQKGTG.

Belongs to the universal ribosomal protein uL4 family. In terms of assembly, part of the 50S ribosomal subunit.

Its function is as follows. One of the primary rRNA binding proteins, this protein initially binds near the 5'-end of the 23S rRNA. It is important during the early stages of 50S assembly. It makes multiple contacts with different domains of the 23S rRNA in the assembled 50S subunit and ribosome. In terms of biological role, forms part of the polypeptide exit tunnel. This chain is Large ribosomal subunit protein uL4, found in Corynebacterium glutamicum (strain R).